A 589-amino-acid chain; its full sequence is MPTRTSRRTFVKGLAASSILSGLGLWRSPAWALPNPGQPDGLSGTEFDLTIGETQVNITGNARTAMTINGGIPGPLLRWREGDTVTLRVKNRLDETTSIHWHGIILPANMDGVPGLSFDGIAPDGMYVYRFKVRQHGTYWYHSHSGFQEQSGVYGPLVIDAKEPEPFTYEREHVVMLTDWADEDPARVMKKLKKQSDYYNNNKRTVGDFINDVGEKGWSATTAERWMWAQMKMNPTDLADVSGATYTYLMNGQAPNMNWTGLFKPGEQIRLRFINGSSMTYFDVRIPGLKMTVVASDGLHIKPVVVDELRIAVAETFDVIVEPADGAYTLFAQSMDRTGFARGTLTSRPGMQAEVPPLDPRPLLSMDDMGMAGMDHGSMNHSAKPAMDGMDHSKMDHDSMPGMDHGTMPMQEAPVMQSHPDSERNNPLVDMQAMSTSAKLNDPGIGLRDNGRKVLTYADLRSTFEDPDGREPSRTIELHLTGHMEKFAWSFDGVKFSDAKPLMLKYGERVRIVLVNDTMMTHPIHLHGMWSDLEDENGQFMVRKHTIDMPPGSRRSYRVTADALGRWAYHCHMLYHMEMGMFREVRVEE.

The tat-type signal signal peptide spans 1-32; the sequence is MPTRTSRRTFVKGLAASSILSGLGLWRSPAWA. Positions 100, 102, 142, and 144 each coordinate Cu cation. 2 repeat units span residues 367–374 and 396–403. The interval 367–403 is 2 X 8 AA tandem repeats of D-H-X-X-M-X-G-M; sequence DDMGMAGMDHGSMNHSAKPAMDGMDHSKMDHDSMPGM. 8 residues coordinate Cu cation: histidine 522, histidine 525, histidine 527, histidine 570, cysteine 571, histidine 572, histidine 576, and methionine 581.

Belongs to the multicopper oxidase family. CopA subfamily. Post-translationally, predicted to be exported by the Tat system. The position of the signal peptide cleavage has not been experimentally proven.

The protein localises to the periplasm. Its function is as follows. Could be involved in copper resistance. May have oxidase activity. The sequence is that of Copper resistance protein A homolog (copA) from Pseudomonas syringae pv. tomato (strain ATCC BAA-871 / DC3000).